Here is a 264-residue protein sequence, read N- to C-terminus: Thymidylate synthase (264 aa).

Residue arginine 21 coordinates dUMP. (6R)-5,10-methylene-5,6,7,8-tetrahydrofolate is bound at residue histidine 51. Position 126-127 (126-127 (RR)) interacts with dUMP. Cysteine 146 (nucleophile) is an active-site residue. Residues 166–169 (RSAD), asparagine 177, and 207–209 (HLY) each bind dUMP. Aspartate 169 serves as a coordination point for (6R)-5,10-methylene-5,6,7,8-tetrahydrofolate. Alanine 263 is a binding site for (6R)-5,10-methylene-5,6,7,8-tetrahydrofolate.

Belongs to the thymidylate synthase family. Bacterial-type ThyA subfamily. Homodimer.

The protein resides in the cytoplasm. The catalysed reaction is dUMP + (6R)-5,10-methylene-5,6,7,8-tetrahydrofolate = 7,8-dihydrofolate + dTMP. It participates in pyrimidine metabolism; dTTP biosynthesis. Catalyzes the reductive methylation of 2'-deoxyuridine-5'-monophosphate (dUMP) to 2'-deoxythymidine-5'-monophosphate (dTMP) while utilizing 5,10-methylenetetrahydrofolate (mTHF) as the methyl donor and reductant in the reaction, yielding dihydrofolate (DHF) as a by-product. This enzymatic reaction provides an intracellular de novo source of dTMP, an essential precursor for DNA biosynthesis. This is Thymidylate synthase from Legionella pneumophila (strain Lens).